A 360-amino-acid polypeptide reads, in one-letter code: Lactosylceramide 4-alpha-galactosyltransferase (360 aa).

The Cytoplasmic portion of the chain corresponds to 1-30 (MGISRSDLEETMSKPPDCLPRMLRGTPRQR). Residues 31-51 (VFTLFIISFKFTFLVSILIYW) traverse the membrane as a helical; Signal-anchor for type II membrane protein segment. Over 52 to 360 (HTVGAPKDQR…TTHRAMTMYL (309 aa)) the chain is Lumenal. Residues 199-201 (DTD) carry the DXD motif motif. 2 N-linked (GlcNAc...) asparagine glycosylation sites follow: Asn210 and Asn316.

Belongs to the glycosyltransferase 32 family. In terms of tissue distribution, ubiquitous. Highly expressed in kidney, mesenteric lymph node, spleen and brain.

The protein localises to the golgi apparatus membrane. The catalysed reaction is a beta-D-Gal-(1-&gt;4)-beta-D-Glc-(1&lt;-&gt;1)-Cer(d18:1(4E)) + UDP-alpha-D-galactose = a globoside Gb3Cer (d18:1(4E)) + UDP + H(+). It catalyses the reaction a beta-D-Gal-(1&lt;-&gt;1')-ceramide + UDP-alpha-D-galactose = alpha-D-Gal-(1-&gt;4)-beta-D-Gal-(1&lt;-&gt;1')-Cer + UDP + H(+). It functions in the pathway glycolipid biosynthesis. In terms of biological role, catalyzes the transfer of galactose from UDP-alpha-D-galactose to lactosylceramide/beta-D-galactosyl-(1-&gt;4)-beta-D-glucosyl-(1&lt;-&gt;1)-ceramide(d18:1(4E)) to produce globotriaosylceramide/globoside Gb3Cer (d18:1(4E)). Also able to transfer galactose to galactosylceramide/beta-D-Gal-(1&lt;-&gt;1')-Cer. Globoside Gb3Cer is a glycosphingolipid of the globo serie, one of the major types of neutral root structures of glycosphingolipids, that constitute a significant portion of mammalian cell membranes. This chain is Lactosylceramide 4-alpha-galactosyltransferase, found in Rattus norvegicus (Rat).